Reading from the N-terminus, the 691-residue chain is Elongation factor G (691 aa).

One can recognise a tr-type G domain in the interval 8-282; that stretch reads ERVRNIGIAA…AVVDYLPAPV (275 aa). GTP-binding positions include 17-24, 81-85, and 135-138; these read AHIDAGKT, DTPGH, and NKMD.

The protein belongs to the TRAFAC class translation factor GTPase superfamily. Classic translation factor GTPase family. EF-G/EF-2 subfamily.

Its subcellular location is the cytoplasm. Its function is as follows. Catalyzes the GTP-dependent ribosomal translocation step during translation elongation. During this step, the ribosome changes from the pre-translocational (PRE) to the post-translocational (POST) state as the newly formed A-site-bound peptidyl-tRNA and P-site-bound deacylated tRNA move to the P and E sites, respectively. Catalyzes the coordinated movement of the two tRNA molecules, the mRNA and conformational changes in the ribosome. The chain is Elongation factor G from Prochlorococcus marinus (strain MIT 9312).